The chain runs to 313 residues: Cytochrome c biogenesis protein CcsA (313 aa).

Transmembrane regions (helical) follow at residues 9–29 (ILTH…LITF), 44–64 (GIIV…VSSG), 71–91 (LYES…IPYF), 111–131 (GFAT…VPAL), 143–163 (MILG…LLVI), 217–237 (VISL…VWAN), 244–264 (WNWD…AIYL), and 278–298 (AIVA…VNLL).

This sequence belongs to the CcmF/CycK/Ccl1/NrfE/CcsA family. As to quaternary structure, may interact with Ccs1.

It is found in the plastid. It localises to the chloroplast thylakoid membrane. Required during biogenesis of c-type cytochromes (cytochrome c6 and cytochrome f) at the step of heme attachment. The polypeptide is Cytochrome c biogenesis protein CcsA (Solanum lycopersicum (Tomato)).